A 171-amino-acid polypeptide reads, in one-letter code: Adenine phosphoribosyltransferase (171 aa).

Belongs to the purine/pyrimidine phosphoribosyltransferase family. In terms of assembly, homodimer.

The protein resides in the cytoplasm. It carries out the reaction AMP + diphosphate = 5-phospho-alpha-D-ribose 1-diphosphate + adenine. It functions in the pathway purine metabolism; AMP biosynthesis via salvage pathway; AMP from adenine: step 1/1. In terms of biological role, catalyzes a salvage reaction resulting in the formation of AMP, that is energically less costly than de novo synthesis. The chain is Adenine phosphoribosyltransferase from Geotalea uraniireducens (strain Rf4) (Geobacter uraniireducens).